A 305-amino-acid polypeptide reads, in one-letter code: GMP synthase [glutamine-hydrolyzing] subunit B (305 aa).

In terms of domain architecture, GMPS ATP-PPase spans 2-184; the sequence is VDANAFIDEA…LPLPEEISER (183 aa). 29–35 contributes to the ATP binding site; that stretch reads SGGVDSS.

As to quaternary structure, heterodimer composed of a glutamine amidotransferase subunit (A) and a GMP-binding subunit (B).

It catalyses the reaction XMP + L-glutamine + ATP + H2O = GMP + L-glutamate + AMP + diphosphate + 2 H(+). It functions in the pathway purine metabolism; GMP biosynthesis; GMP from XMP (L-Gln route): step 1/1. Catalyzes the synthesis of GMP from XMP. The sequence is that of GMP synthase [glutamine-hydrolyzing] subunit B from Methanocella arvoryzae (strain DSM 22066 / NBRC 105507 / MRE50).